A 347-amino-acid polypeptide reads, in one-letter code: UPF0284 protein M1425_0030 (347 aa).

The protein belongs to the UPF0284 family.

The chain is UPF0284 protein M1425_0030 from Saccharolobus islandicus (strain M.14.25 / Kamchatka #1) (Sulfolobus islandicus).